The primary structure comprises 470 residues: Nuclear receptor subfamily 0 group B member 1 (470 aa).

Tandem repeats lie at residues 1–67 (MAGE…YRCC), 68–133 (FCGK…YRCC), and 134–200 (FCGE…YRCC). The interval 1–253 (MAGENHQWQG…RPVALKNPQV (253 aa)) is 4 X 67 AA tandem repeats. Short sequence motifs (LXXLL motif) lie at residues 13–17 (LYNML), 80–84 (LYSML), and 146–150 (LYSLL). The 4; truncated repeat unit spans residues 201–253 (FCGEDHPQQGSTLYCMPTSTNQAQAAPEERPRAPWWDTSSGALRPVALKNPQV). The region spanning 205–469 (DHPQQGSTLY…DMMLEMLCTK (265 aa)) is the NR LBD domain. The AF-2 motif motif lies at 461–466 (MMLEML).

Belongs to the nuclear hormone receptor family. NR0 subfamily. In terms of assembly, homodimer. Interacts with NR5A1, NR5A2, NR0B2 and with COPS2. Interacts with ESRRB; represses ESRRB activity at the GATA6 promoter.

It localises to the nucleus. The protein localises to the cytoplasm. Functionally, nuclear receptor that lacks a DNA-binding domain and acts as a corepressor that inhibits the transcriptional activity of other nuclear receptors through heterodimeric interactions. Component of a cascade required for the development of the hypothalamic-pituitary-adrenal-gonadal axis. May also have a role in the development of the embryo and in the maintenance of embryonic stem cell pluripotency. This Macaca mulatta (Rhesus macaque) protein is Nuclear receptor subfamily 0 group B member 1 (NR0B1).